The following is a 46-amino-acid chain: MEKKLEEVKQLLFRLELDIKETTDSLRNINKSIDQLDKYNYAMKIS.

Belongs to the DegQ family.

In terms of biological role, stimulates the phosphotransfer from phospho-DegS to DegU. Affects protease and levansucrose production. The polypeptide is Degradation enzyme regulation protein DegQ (degQ) (Bacillus subtilis (strain 168)).